The sequence spans 89 residues: Small ribosomal subunit protein bS20 (89 aa).

Belongs to the bacterial ribosomal protein bS20 family.

Its function is as follows. Binds directly to 16S ribosomal RNA. The protein is Small ribosomal subunit protein bS20 of Solidesulfovibrio magneticus (strain ATCC 700980 / DSM 13731 / RS-1) (Desulfovibrio magneticus).